Reading from the N-terminus, the 269-residue chain is Hydroxyethylthiazole kinase (269 aa).

Residue M45 coordinates substrate. Residues R121 and T167 each coordinate ATP. G194 is a substrate binding site.

It belongs to the Thz kinase family. The cofactor is Mg(2+).

The enzyme catalyses 5-(2-hydroxyethyl)-4-methylthiazole + ATP = 4-methyl-5-(2-phosphooxyethyl)-thiazole + ADP + H(+). It functions in the pathway cofactor biosynthesis; thiamine diphosphate biosynthesis; 4-methyl-5-(2-phosphoethyl)-thiazole from 5-(2-hydroxyethyl)-4-methylthiazole: step 1/1. Catalyzes the phosphorylation of the hydroxyl group of 4-methyl-5-beta-hydroxyethylthiazole (THZ). The chain is Hydroxyethylthiazole kinase from Brevibacillus brevis (strain 47 / JCM 6285 / NBRC 100599).